The chain runs to 481 residues: Cysteine--tRNA ligase (481 aa).

C29 contributes to the Zn(2+) binding site. Residues 31–41 carry the 'HIGH' region motif; that stretch reads PTTYDYIHLGN. Residues C209, H234, and E238 each coordinate Zn(2+). The short motif at 267–271 is the 'KMSKS' region element; it reads KMSKS. K270 provides a ligand contact to ATP.

The protein belongs to the class-I aminoacyl-tRNA synthetase family. As to quaternary structure, monomer. Requires Zn(2+) as cofactor.

It is found in the cytoplasm. The enzyme catalyses tRNA(Cys) + L-cysteine + ATP = L-cysteinyl-tRNA(Cys) + AMP + diphosphate. The protein is Cysteine--tRNA ligase of Heliobacterium modesticaldum (strain ATCC 51547 / Ice1).